A 104-amino-acid polypeptide reads, in one-letter code: Large ribosomal subunit protein uL24 (104 aa).

This sequence belongs to the universal ribosomal protein uL24 family. In terms of assembly, part of the 50S ribosomal subunit.

Functionally, one of two assembly initiator proteins, it binds directly to the 5'-end of the 23S rRNA, where it nucleates assembly of the 50S subunit. In terms of biological role, one of the proteins that surrounds the polypeptide exit tunnel on the outside of the subunit. The polypeptide is Large ribosomal subunit protein uL24 (Klebsiella pneumoniae (strain 342)).